The chain runs to 469 residues: Uridine kinase-like protein 4 (469 aa).

A uridine kinase region spans residues 46–249 (QRQPFVIGVA…IVQHICTKLG (204 aa)). The tract at residues 259–469 (NLYVIHSTFQ…GDRYFGTDDD (211 aa)) is uracil phosphoribosyltransferase. GTP-binding positions include K283, R292, and 326 to 329 (CKRL). Positions 336 and 361 each coordinate 5-phospho-alpha-D-ribose 1-diphosphate. Residue R381 coordinates GTP. Residues D387, 392-395 (TGNS), and E458 contribute to the 5-phospho-alpha-D-ribose 1-diphosphate site. 457–459 (GEF) lines the uracil pocket.

This sequence in the N-terminal section; belongs to the uridine kinase family. The protein in the C-terminal section; belongs to the UPRTase family. Mg(2+) serves as cofactor.

The catalysed reaction is UMP + diphosphate = 5-phospho-alpha-D-ribose 1-diphosphate + uracil. It carries out the reaction cytidine + ATP = CMP + ADP + H(+). The enzyme catalyses uridine + ATP = UMP + ADP + H(+). It functions in the pathway pyrimidine metabolism; UMP biosynthesis via salvage pathway; UMP from uracil: step 1/1. The protein operates within pyrimidine metabolism; CTP biosynthesis via salvage pathway; CTP from cytidine: step 1/3. Its pathway is pyrimidine metabolism; UMP biosynthesis via salvage pathway; UMP from uridine: step 1/1. Its activity is regulated as follows. Allosterically activated by GTP. Its function is as follows. Involved in the pyrimidine salvage pathway. The uracil phosphoribosyltransferase (UPRT) activity, that catalyzes the conversion of uracil and 5-phospho-alpha-D-ribose 1-diphosphate (PRPP) to UMP and diphosphate, is unsure. The chain is Uridine kinase-like protein 4 (UKL4) from Arabidopsis thaliana (Mouse-ear cress).